A 130-amino-acid polypeptide reads, in one-letter code: Small ribosomal subunit protein uS8 (130 aa).

The protein belongs to the universal ribosomal protein uS8 family. Part of the 30S ribosomal subunit. Contacts proteins S5 and S12.

Its function is as follows. One of the primary rRNA binding proteins, it binds directly to 16S rRNA central domain where it helps coordinate assembly of the platform of the 30S subunit. In Cellvibrio japonicus (strain Ueda107) (Pseudomonas fluorescens subsp. cellulosa), this protein is Small ribosomal subunit protein uS8.